Here is a 165-residue protein sequence, read N- to C-terminus: Transmembrane protein 128 (165 aa).

4 helical membrane passes run Asn-49 to Phe-69, Trp-81 to Val-101, Leu-119 to Trp-139, and Phe-144 to Leu-164.

The protein localises to the membrane. This is Transmembrane protein 128 (TMEM128) from Homo sapiens (Human).